A 204-amino-acid chain; its full sequence is Large ribosomal subunit protein uL3 (204 aa).

It belongs to the universal ribosomal protein uL3 family. In terms of assembly, part of the 50S ribosomal subunit. Forms a cluster with proteins L14 and L19.

In terms of biological role, one of the primary rRNA binding proteins, it binds directly near the 3'-end of the 23S rRNA, where it nucleates assembly of the 50S subunit. This chain is Large ribosomal subunit protein uL3, found in Azobacteroides pseudotrichonymphae genomovar. CFP2.